The following is a 326-amino-acid chain: Aspartate carbamoyltransferase catalytic subunit (326 aa).

Carbamoyl phosphate contacts are provided by R58 and T59. K86 provides a ligand contact to L-aspartate. Carbamoyl phosphate-binding residues include R108, H141, and Q144. R181 and R239 together coordinate L-aspartate. Residues G280 and P281 each coordinate carbamoyl phosphate.

It belongs to the aspartate/ornithine carbamoyltransferase superfamily. ATCase family. Heterododecamer (2C3:3R2) of six catalytic PyrB chains organized as two trimers (C3), and six regulatory PyrI chains organized as three dimers (R2).

The catalysed reaction is carbamoyl phosphate + L-aspartate = N-carbamoyl-L-aspartate + phosphate + H(+). Its pathway is pyrimidine metabolism; UMP biosynthesis via de novo pathway; (S)-dihydroorotate from bicarbonate: step 2/3. Catalyzes the condensation of carbamoyl phosphate and aspartate to form carbamoyl aspartate and inorganic phosphate, the committed step in the de novo pyrimidine nucleotide biosynthesis pathway. This Synechococcus sp. (strain JA-3-3Ab) (Cyanobacteria bacterium Yellowstone A-Prime) protein is Aspartate carbamoyltransferase catalytic subunit.